Here is a 239-residue protein sequence, read N- to C-terminus: Large ribosomal subunit protein uL30 (239 aa).

The disordered stretch occupies residues 1–22; the sequence is MEGVMSEAPQSSIRKKEYEARM.

Belongs to the universal ribosomal protein uL30 family.

The chain is Large ribosomal subunit protein uL30 (RPL7) from Encephalitozoon cuniculi (strain GB-M1) (Microsporidian parasite).